The chain runs to 980 residues: GPI inositol-deacylase (980 aa).

Residues 1-7 (MFMFRNC) are Cytoplasmic-facing. A helical transmembrane segment spans residues 8–28 (AVLLVIGSICCFIYGLFRLHV). Over 29–628 (EVEPNACRMT…EYSYSSALSR (600 aa)) the chain is Lumenal. The active site involves serine 170. Asparagine 427, asparagine 517, and asparagine 596 each carry an N-linked (GlcNAc...) asparagine glycan. A helical transmembrane segment spans residues 629-649 (LVLEFYGWLPAHLVCVLLIVL). Over 650–709 (RKQVETFYDVGTFRSLRPYVGYLQYTSLYIVTACRLLKKLIISSRVFPEPEPLDYSINVS) the chain is Cytoplasmic. The chain crosses the membrane as a helical span at residues 710–730 (IVIHCAAIALSLLATLGTWLA). Residues 731 to 774 (LTLYGNAFYRLALRITRLSQATSNVMISIMTHLPITYGILTIAT) are Lumenal-facing. Residues 775–795 (AMGTCSGVGLLLAFVFYFLML) form a helical membrane-spanning segment. Residues 796–867 (SNAYKDYLED…CVGLQNFSFH (72 aa)) lie on the Cytoplasmic side of the membrane. The disordered stretch occupies residues 821 to 853 (AVTEQEDATEEQNEEQNALKQNDEQKQQQQEEE). A compositionally biased stretch (acidic residues) spans 824–834 (EQEDATEEQNE). The chain crosses the membrane as a helical span at residues 868–888 (VTLLLMLFVQLLLNAPSSLAW). The Lumenal portion of the chain corresponds to 889–895 (LRSRRHG). A helical transmembrane segment spans residues 896–916 (INLPDPSLYPSIVVLASLSLL). The Cytoplasmic segment spans residues 917–929 (LQLRAPQKCQGYW). Residues 930-950 (MLSIAFYILAGVVLLYCQAAI) form a helical membrane-spanning segment. Residues 951–954 (YRLT) lie on the Lumenal side of the membrane. A helical membrane pass occupies residues 955 to 975 (YVIAGAFALLSAHQSLWILWG). Residues 976–980 (RVSRV) are Cytoplasmic-facing.

This sequence belongs to the GPI inositol-deacylase family.

The protein localises to the endoplasmic reticulum membrane. In terms of biological role, involved in inositol deacylation of GPI-anchored proteins. The sequence is that of GPI inositol-deacylase from Drosophila melanogaster (Fruit fly).